The sequence spans 84 residues: Alpha-mammal toxin Ts2 (84 aa).

The first 20 residues, 1–20 (MKGFLLFISILMMIGTIVVG), serve as a signal peptide directing secretion. The 63-residue stretch at 21–83 (KEGYAMDHEG…VWDYATNKCG (63 aa)) folds into the LCN-type CS-alpha/beta domain. 4 cysteine pairs are disulfide-bonded: Cys31/Cys82, Cys35/Cys58, Cys43/Cys63, and Cys47/Cys65. Cys82 is modified (cysteine amide).

Belongs to the long (4 C-C) scorpion toxin superfamily. Sodium channel inhibitor family. Beta subfamily. As to expression, expressed by the venom gland.

The protein resides in the secreted. Its function is as follows. Alpha toxins bind voltage-independently at site-3 of sodium channels (Nav) and inhibit the inactivation of the activated channels, thereby blocking neuronal transmission. This toxin acts on Nav1.2/SCN2A, Nav1.3/SCN3A, Nav1.5/SCN5A, Nav1.6/SCN8A and Nav1.7/SCN9A voltage-gated sodium channels, with the highest affinity for Nav1.3/SCN3A, followed by Nav1.6/SCN8A and Nav1.7/SCN9A which are affected almost equally. Interestingly, shows a significant shift of the voltage dependence of activation for Nav1.3/SCN3A that is characteristic of beta-toxins. In addition, in presence of LPS, this toxin inhibits the release of NO, IL-6 and TNF-alpha in J774.1 cells. Further, in the absence of LPS, it stimulates the production of the anti-inflammatory cytokine IL-10. This toxin is active on mammals. This chain is Alpha-mammal toxin Ts2, found in Tityus serrulatus (Brazilian scorpion).